We begin with the raw amino-acid sequence, 239 residues long: 7-cyano-7-deazaguanine synthase (239 aa).

13–23 (LSGGQDSATCL) contacts ATP. Zn(2+)-binding residues include Cys-199, Cys-214, Cys-217, and Cys-220.

This sequence belongs to the QueC family. The cofactor is Zn(2+).

The catalysed reaction is 7-carboxy-7-deazaguanine + NH4(+) + ATP = 7-cyano-7-deazaguanine + ADP + phosphate + H2O + H(+). It functions in the pathway purine metabolism; 7-cyano-7-deazaguanine biosynthesis. Catalyzes the ATP-dependent conversion of 7-carboxy-7-deazaguanine (CDG) to 7-cyano-7-deazaguanine (preQ(0)). The chain is 7-cyano-7-deazaguanine synthase from Acidovorax ebreus (strain TPSY) (Diaphorobacter sp. (strain TPSY)).